A 337-amino-acid polypeptide reads, in one-letter code: GDP-fucose transporter, Golgi (337 aa).

A run of 8 helical transmembrane segments spans residues 13–35 (NKYL…TVFV), 45–67 (VNLG…ICFV), 95–117 (ILPL…SYVT), 121–140 (YYIG…YVIL), 145–163 (SFKC…WLGV), 173–192 (SWRG…MFSI), 205–227 (VWLL…IIIN), and 242–264 (SWFW…VTAL).

This sequence belongs to the TPT transporter family. SLC35C subfamily.

It is found in the golgi apparatus membrane. Functionally, involved in GDP-fucose import from the cytoplasm into the Golgi lumen. Plays a major role in the fucosylation of N-glycans. Functions redundantly with Efr in the O-fucosylation of Notch, positively regulating Notch signaling. This is GDP-fucose transporter, Golgi from Drosophila melanogaster (Fruit fly).